A 438-amino-acid polypeptide reads, in one-letter code: MTRLPKQGLLLLQSLALLSSAFGNIIPNTDNCCILDGRFGEYCPTTCGISDFLNRYQENVDTDLQYLENLLTQISNSTSGTTIIVEHLIDSGKKPATSPQTAIDPMTQKSKTCWMKLTDMKNYYQYEENILYLQEVYSSNQNKIFLLKQKIANLELQCQQPCRDTVQIQEFTGKDCQEVANKGARLSGLYYIKPLKAKQQFLVYCEIEPSGSAWTVIQRRLDGSVNFHKNWVQYREGFGYLSPNDKTEFWLGNEKIHLLSTQSTIPYVMRIELEDWSNQKSTADYSTFRLGSEKDNYRFTYAYFIGGDAGDAFDGFDFGDDPSDKFYTSHNGMQFSTFDKDNDKFDGNCAEQDGSGWWMNRCHAAHLNGKYYQGGTYSEADSGPSGYDNGIIWATWRRRWYSMKSVTMKIMPLNRYGAEGQQTLGGSKKSDFENRGDF.

A signal peptide spans 1 to 25 (MTRLPKQGLLLLQSLALLSSAFGNI). Residue asparagine 76 is glycosylated (N-linked (GlcNAc...) asparagine). In terms of domain architecture, Fibrinogen C-terminal spans 167 to 414 (QIQEFTGKDC…SVTMKIMPLN (248 aa)). Cysteines 176 and 205 form a disulfide. Ca(2+)-binding residues include aspartate 341, aspartate 343, and glycine 347. A disulfide bond links cysteine 349 and cysteine 362.

In terms of assembly, heterohexamer; disulfide linked. Contains 2 sets of 3 non-identical chains (alpha, beta and gamma). The 2 heterotrimers are in head to head conformation with the N-termini in a small central domain. Conversion of fibrinogen to fibrin is triggered by thrombin, which cleaves fibrinopeptides A and B from alpha and beta chains, and thus exposes the N-terminal polymerization sites responsible for the formation of the soft clot. The soft clot is converted into the hard clot by factor XIIIA which catalyzes the epsilon-(gamma-glutamyl)lysine cross-linking between gamma chains (stronger) and between alpha chains (weaker) of different monomers.

It localises to the secreted. Functionally, together with fibrinogen alpha (FGA) and fibrinogen beta (FGB), polymerizes to form an insoluble fibrin matrix. Has a major function in hemostasis as one of the primary components of blood clots. This is Fibrinogen gamma chain (fgg) from Xenopus laevis (African clawed frog).